The sequence spans 166 residues: Deglycase PfpI (166 aa).

In terms of domain architecture, PfpI endopeptidase spans 1 to 166 (MKILFLSANE…WMREFVKLLK (166 aa)). The active-site Nucleophile is the Cys-100. His-101 is an active-site residue.

Belongs to the peptidase C56 family. Homooligomer. Exists in two functional species: the predominant form is a homohexamer that comprises about 90% of the total activity, and the minor form is trimeric.

Its subcellular location is the cytoplasm. The catalysed reaction is N(omega)-(1-hydroxy-2-oxopropyl)-L-arginyl-[protein] + H2O = lactate + L-arginyl-[protein] + H(+). It catalyses the reaction N(6)-(1-hydroxy-2-oxopropyl)-L-lysyl-[protein] + H2O = lactate + L-lysyl-[protein] + H(+). It carries out the reaction S-(1-hydroxy-2-oxopropyl)-L-cysteinyl-[protein] + H2O = lactate + L-cysteinyl-[protein] + H(+). The enzyme catalyses N(omega)-(1-hydroxy-2-oxoethyl)-L-arginyl-[protein] + H2O = L-arginyl-[protein] + glycolate + H(+). The catalysed reaction is N(6)-(1-hydroxy-2-oxoethyl)-L-lysyl-[protein] + H2O = glycolate + L-lysyl-[protein] + H(+). It catalyses the reaction S-(1-hydroxy-2-oxoethyl)-L-cysteinyl-[protein] + H2O = glycolate + L-cysteinyl-[protein] + H(+). Its function is as follows. Deglycase that catalyzes the deglycation of the Maillard adducts formed between amino groups of proteins and reactive carbonyl groups of glyoxals. Thus, functions as a protein deglycase that repairs methylglyoxal- and glyoxal-glycated proteins, and releases repaired proteins and lactate or glycolate, respectively. Deglycates cysteine, arginine and lysine residues in proteins, and thus reactivates these proteins by reversing glycation by glyoxals. Thus, was shown to afford full protection against glycation of thioredoxin by glyoxal. Acts on early glycation intermediates (hemithioacetals and aminocarbinols), preventing the formation of advanced glycation endproducts (AGE) that cause irreversible damage. Prevents acrylamide formation in asparagine/glyoxal and asparagine/sugar mixtures, likely by degrading asparagine/glyoxal Maillard adducts formed at high temperatures. Also displays proteolytic activity. Cleaves at the carboxyl side of both basic and hydrophobic residues in the P1 position, indicating trypsin- and chymotrypsin-like specificities. In Pyrococcus furiosus (strain ATCC 43587 / DSM 3638 / JCM 8422 / Vc1), this protein is Deglycase PfpI.